A 514-amino-acid chain; its full sequence is Putative GTP-binding protein 6 (514 aa).

Residues 48–71 form a disordered region; the sequence is WAGGGPVRGGGEEDPREDEEEEED. A compositionally biased stretch (acidic residues) spans 59–71; that stretch reads EEDPREDEEEEED. Residues 285–449 enclose the Hflx-type G domain; it reads PVVSVVGYTN…ALEASVLRAT (165 aa). Mg(2+)-binding residues include Thr-298 and Thr-319.

It belongs to the TRAFAC class OBG-HflX-like GTPase superfamily. HflX GTPase family. Mg(2+) is required as a cofactor.

This chain is Putative GTP-binding protein 6 (Gtpbp6), found in Mus musculus (Mouse).